The sequence spans 675 residues: DNA ligase (675 aa).

NAD(+)-binding positions include 33–37, 82–83, and glutamate 114; these read DAEYD and SL. Lysine 116 acts as the N6-AMP-lysine intermediate in catalysis. Arginine 137, glutamate 174, lysine 291, and lysine 315 together coordinate NAD(+). Zn(2+) is bound by residues cysteine 409, cysteine 412, cysteine 427, and cysteine 433. Residues 595-675 form the BRCT domain; it reads AGDNPFAGKT…EMIRLLDQSK (81 aa).

The protein belongs to the NAD-dependent DNA ligase family. LigA subfamily. Requires Mg(2+) as cofactor. Mn(2+) is required as a cofactor.

It catalyses the reaction NAD(+) + (deoxyribonucleotide)n-3'-hydroxyl + 5'-phospho-(deoxyribonucleotide)m = (deoxyribonucleotide)n+m + AMP + beta-nicotinamide D-nucleotide.. Functionally, DNA ligase that catalyzes the formation of phosphodiester linkages between 5'-phosphoryl and 3'-hydroxyl groups in double-stranded DNA using NAD as a coenzyme and as the energy source for the reaction. It is essential for DNA replication and repair of damaged DNA. The protein is DNA ligase of Proteus mirabilis (strain HI4320).